The following is a 299-amino-acid chain: Recombination-associated protein RdgC (299 aa).

The protein belongs to the RdgC family.

It localises to the cytoplasm. Its subcellular location is the nucleoid. Its function is as follows. May be involved in recombination. The sequence is that of Recombination-associated protein RdgC from Neisseria meningitidis serogroup B (strain ATCC BAA-335 / MC58).